Reading from the N-terminus, the 169-residue chain is MTERQVECVLIEIPQGSRNKYEYDKERKVIRFDRMLFSSIVYPCDYGFFPDTLALDGDPLDAMVLMWEPTFPGCVIDVHPVAMLDMEDDKGRDEKILCVPQRDPLWNYIKTIEQVPPHLLKEITHFFETYKNLERKDVVVYGWRDLETARKVIQEAKDRYTEQKKLSNQ.

Residues lysine 20, arginine 34, and tyrosine 46 each contribute to the substrate site. Mg(2+) contacts are provided by aspartate 56, aspartate 61, and aspartate 93. Tyrosine 130 is a substrate binding site.

The protein belongs to the PPase family. As to quaternary structure, homohexamer. Mg(2+) is required as a cofactor.

The protein localises to the cytoplasm. It carries out the reaction diphosphate + H2O = 2 phosphate + H(+). Its function is as follows. Catalyzes the hydrolysis of inorganic pyrophosphate (PPi) forming two phosphate ions. The protein is Inorganic pyrophosphatase of Methanosarcina mazei (strain ATCC BAA-159 / DSM 3647 / Goe1 / Go1 / JCM 11833 / OCM 88) (Methanosarcina frisia).